Reading from the N-terminus, the 456-residue chain is Hydroxymethylglutaryl coenzyme A synthase (456 aa).

Ala34 contacts (3S)-3-hydroxy-3-methylglutaryl-CoA. Glu85 serves as the catalytic Proton donor/acceptor. Positions 119, 161, 211, 258, 267, 335, and 369 each coordinate (3S)-3-hydroxy-3-methylglutaryl-CoA. Cys119 acts as the Acyl-thioester intermediate in catalysis. His258 functions as the Proton donor/acceptor in the catalytic mechanism.

Belongs to the thiolase-like superfamily. HMG-CoA synthase family.

It carries out the reaction acetoacetyl-CoA + acetyl-CoA + H2O = (3S)-3-hydroxy-3-methylglutaryl-CoA + CoA + H(+). Functionally, HMG-CoA synthase; part of the gene cluster that mediates the biosynthesis of 1233A, a natural compound known as an inhibitor of HMG-CoA synthase in the mevalonate pathway and with antibacterial and antifungal activities. This enzyme condenses acetyl-CoA with acetoacetyl-CoA to form HMG-CoA, which is the substrate for HMG-CoA reductase. As part of the 1233A biosynthesis cluster, is involved in conferring self-resistance to 1233A. This is Hydroxymethylglutaryl coenzyme A synthase from Fusarium sp.